Here is a 135-residue protein sequence, read N- to C-terminus: Large ribosomal subunit protein eL32 (135 aa).

The protein belongs to the eukaryotic ribosomal protein eL32 family. Component of the large ribosomal subunit.

The protein localises to the cytoplasm. Functionally, component of the large ribosomal subunit. The ribosome is a large ribonucleoprotein complex responsible for the synthesis of proteins in the cell. The chain is Large ribosomal subunit protein eL32 (rpl32) from Ictalurus punctatus (Channel catfish).